The following is a 543-amino-acid chain: GADAKEIAFDQKSRAALQAGVEKLANAVGVTLGPRGRNVVLDEYGNPKVVNDGVTIARAIELANPMENAGAALIREVASKTNDSAGDGTTTACVLAREIIKLGILSVTSGANPVSLKKGIDKTVQGLIEELERKARPVKGSGDIKAVASISAGNDELIGAMIADAIDKVGPDGVLSIESSSSFETTVDVEEGMEIDRGYISPQFVTNLEKSIVEFENARVLITDQKITSIKEIIPLLEQTTQLRCPLFIVAEDITGEALATLVVNKLRGIINVAAIKAPSFGERRKAVLQDIAIVTGAEYLAKDLGLLVENATVDQLGTARKITIHQTTTTLIADAASKDEIQARVAQLKKELSETDSIYDSEKLAERIAKLSGGVAVIKVGATTETELEDRQLRIEDAKNATFAAIEEGIVPGGGAAYVHLSTYVPAIKETIEDHDERLGADIIQKALQAPASLIANNAGVEGEVVIEKIKESEWEMGYNAMTDKYENLIESGVIDPAKVTRCALQNAASVSGMVLTTQAIVVEKPKPKPKVAEPAEGQLSV.

A chloroplast-targeting transit peptide spans 1–2; it reads GA.

The protein belongs to the chaperonin (HSP60) family. In terms of assembly, oligomer of probably six alpha and six beta subunits.

It localises to the plastid. The protein localises to the chloroplast. This protein binds RuBisCO small and large subunits and is implicated in the assembly of the enzyme oligomer. This Triticum aestivum (Wheat) protein is RuBisCO large subunit-binding protein subunit alpha, chloroplastic.